The chain runs to 208 residues: Glutathione S-transferase F6 (208 aa).

Positions 2 to 83 constitute a GST N-terminal domain; the sequence is AGIKVFGHPA…YIAHEFSDKG (82 aa). Residues 12-13, 41-42, 54-55, and 67-68 each bind glutathione; these read ST, HK, KV, and ES. In terms of domain architecture, GST C-terminal spans 89-208; sequence TGKDMAIIAM…TSRPSAQKVL (120 aa).

This sequence belongs to the GST superfamily. Phi family.

The protein localises to the cytoplasm. It localises to the cytosol. The catalysed reaction is RX + glutathione = an S-substituted glutathione + a halide anion + H(+). In terms of biological role, involved in camalexin biosynthesis by probably catalyzing the conjugation of GSH with indole-3-acetonitrile (IAN). May be involved in the conjugation of reduced glutathione to a wide number of exogenous and endogenous hydrophobic electrophiles and have a detoxification role against certain herbicides. This is Glutathione S-transferase F6 (GSTF6) from Arabidopsis thaliana (Mouse-ear cress).